A 457-amino-acid chain; its full sequence is Serine--tRNA ligase (457 aa).

252-254 (TAE) serves as a coordination point for L-serine. ATP is bound by residues 283-285 (RKE) and Val299. Residue Glu306 participates in L-serine binding. 370-373 (EMVS) is an ATP binding site. Position 406 (Thr406) interacts with L-serine.

This sequence belongs to the class-II aminoacyl-tRNA synthetase family. Type-1 seryl-tRNA synthetase subfamily. Homodimer. The tRNA molecule binds across the dimer.

It is found in the cytoplasm. It catalyses the reaction tRNA(Ser) + L-serine + ATP = L-seryl-tRNA(Ser) + AMP + diphosphate + H(+). The enzyme catalyses tRNA(Sec) + L-serine + ATP = L-seryl-tRNA(Sec) + AMP + diphosphate + H(+). Its pathway is aminoacyl-tRNA biosynthesis; selenocysteinyl-tRNA(Sec) biosynthesis; L-seryl-tRNA(Sec) from L-serine and tRNA(Sec): step 1/1. Functionally, catalyzes the attachment of serine to tRNA(Ser). Is also able to aminoacylate tRNA(Sec) with serine, to form the misacylated tRNA L-seryl-tRNA(Sec), which will be further converted into selenocysteinyl-tRNA(Sec). The chain is Serine--tRNA ligase from Saccharolobus islandicus (strain Y.N.15.51 / Yellowstone #2) (Sulfolobus islandicus).